Consider the following 264-residue polypeptide: 3-methyl-2-oxobutanoate hydroxymethyltransferase (264 aa).

2 residues coordinate Mg(2+): Asp-45 and Asp-84. Residues 45–46 (DS), Asp-84, and Lys-112 contribute to the 3-methyl-2-oxobutanoate site. Mg(2+) is bound at residue Glu-114. Glu-181 functions as the Proton acceptor in the catalytic mechanism.

It belongs to the PanB family. Homodecamer; pentamer of dimers. Mg(2+) is required as a cofactor.

The protein resides in the cytoplasm. The enzyme catalyses 3-methyl-2-oxobutanoate + (6R)-5,10-methylene-5,6,7,8-tetrahydrofolate + H2O = 2-dehydropantoate + (6S)-5,6,7,8-tetrahydrofolate. It participates in cofactor biosynthesis; (R)-pantothenate biosynthesis; (R)-pantoate from 3-methyl-2-oxobutanoate: step 1/2. Its function is as follows. Catalyzes the reversible reaction in which hydroxymethyl group from 5,10-methylenetetrahydrofolate is transferred onto alpha-ketoisovalerate to form ketopantoate. The sequence is that of 3-methyl-2-oxobutanoate hydroxymethyltransferase from Psychromonas ingrahamii (strain DSM 17664 / CCUG 51855 / 37).